Here is a 329-residue protein sequence, read N- to C-terminus: DNA-directed RNA polymerase subunit alpha (329 aa).

The segment at 1-231 (MQTNLLKPKT…EQLAVFAQLE (231 aa)) is alpha N-terminal domain (alpha-NTD). The interval 249–329 (FDPILLRPVD…SWPPAGLDKR (81 aa)) is alpha C-terminal domain (alpha-CTD).

The protein belongs to the RNA polymerase alpha chain family. As to quaternary structure, homodimer. The RNAP catalytic core consists of 2 alpha, 1 beta, 1 beta' and 1 omega subunit. When a sigma factor is associated with the core the holoenzyme is formed, which can initiate transcription.

The catalysed reaction is RNA(n) + a ribonucleoside 5'-triphosphate = RNA(n+1) + diphosphate. In terms of biological role, DNA-dependent RNA polymerase catalyzes the transcription of DNA into RNA using the four ribonucleoside triphosphates as substrates. This is DNA-directed RNA polymerase subunit alpha from Polaromonas sp. (strain JS666 / ATCC BAA-500).